A 131-amino-acid polypeptide reads, in one-letter code: NADH-quinone oxidoreductase subunit I 2 (131 aa).

2 4Fe-4S ferredoxin-type domains span residues L42–G71 and E81–E110. Residues C51, C54, C57, C61, C90, C93, C96, and C100 each coordinate [4Fe-4S] cluster.

This sequence belongs to the complex I 23 kDa subunit family. NDH-1 is composed of 14 different subunits. Subunits NuoA, H, J, K, L, M, N constitute the membrane sector of the complex. [4Fe-4S] cluster is required as a cofactor.

It is found in the cell inner membrane. The enzyme catalyses a quinone + NADH + 5 H(+)(in) = a quinol + NAD(+) + 4 H(+)(out). Functionally, NDH-1 shuttles electrons from NADH, via FMN and iron-sulfur (Fe-S) centers, to quinones in the respiratory chain. The immediate electron acceptor for the enzyme in this species is believed to be ubiquinone. Couples the redox reaction to proton translocation (for every two electrons transferred, four hydrogen ions are translocated across the cytoplasmic membrane), and thus conserves the redox energy in a proton gradient. The sequence is that of NADH-quinone oxidoreductase subunit I 2 from Geobacter metallireducens (strain ATCC 53774 / DSM 7210 / GS-15).